The sequence spans 198 residues: MKEFIIKANKTVTNGEINLKDLPGSSGRLDLICRCVNSAFFLSHDLRRDTIFYSVLYGPPNPPIALQFVGNELKRVSPDERSIALFIKKALEKDASELWKESTSGIYSSKWEFRDIILKKKNEGKRIFYLHLNGKPLENFEFKNDEDFVFILGDHIGIGEEDEEFLEEIGAEKISLSPLELHADHCIILVHNILDKLK.

Residues Leu130, Gly153, 176 to 181 (LSPLEL), and Cys186 each bind S-adenosyl-L-methionine.

This sequence belongs to the methyltransferase superfamily. TrmY family. Homodimer.

The protein resides in the cytoplasm. It catalyses the reaction pseudouridine(54) in tRNA + S-adenosyl-L-methionine = N(1)-methylpseudouridine(54) in tRNA + S-adenosyl-L-homocysteine + H(+). Specifically catalyzes the N1-methylation of pseudouridine at position 54 (Psi54) in tRNAs. The sequence is that of tRNA (pseudouridine(54)-N(1))-methyltransferase from Methanococcus maripaludis (strain C5 / ATCC BAA-1333).